The sequence spans 174 residues: Crossover junction endodeoxyribonuclease RuvC (174 aa).

Active-site residues include D8, E68, and D140. D8, E68, and D140 together coordinate Mg(2+).

Belongs to the RuvC family. In terms of assembly, homodimer which binds Holliday junction (HJ) DNA. The HJ becomes 2-fold symmetrical on binding to RuvC with unstacked arms; it has a different conformation from HJ DNA in complex with RuvA. In the full resolvosome a probable DNA-RuvA(4)-RuvB(12)-RuvC(2) complex forms which resolves the HJ. It depends on Mg(2+) as a cofactor.

The protein localises to the cytoplasm. It catalyses the reaction Endonucleolytic cleavage at a junction such as a reciprocal single-stranded crossover between two homologous DNA duplexes (Holliday junction).. Functionally, the RuvA-RuvB-RuvC complex processes Holliday junction (HJ) DNA during genetic recombination and DNA repair. Endonuclease that resolves HJ intermediates. Cleaves cruciform DNA by making single-stranded nicks across the HJ at symmetrical positions within the homologous arms, yielding a 5'-phosphate and a 3'-hydroxyl group; requires a central core of homology in the junction. The consensus cleavage sequence is 5'-(A/T)TT(C/G)-3'. Cleavage occurs on the 3'-side of the TT dinucleotide at the point of strand exchange. HJ branch migration catalyzed by RuvA-RuvB allows RuvC to scan DNA until it finds its consensus sequence, where it cleaves and resolves the cruciform DNA. This is Crossover junction endodeoxyribonuclease RuvC from Legionella pneumophila (strain Lens).